The following is a 504-amino-acid chain: MEEFQGYLELDRFQQHDFLYPLIFREYSYALAHGHGLNRYMLLENIGYDNKSSLLIVKRLITTMYQQNYLKISANDSKQNPFFGYNKNLHSKILSEGFAIIVEIPFYLRLISSLEGAEIVRFYNLRSIHSIFPFLEEKFPHLNYSADILIPYPAHLEILVQTLRYRVKDASYLHLLRFFLHEYSNCNSLIITNKSISIFSKSNPRFFLFLYNSYICEYESIFLFLRNQPSHLRLTSSGVLFERLCLYRKIEHFAEVFSNDFPVIPCFLKDPFMHYVRYQGKSILASKDTPLLMNKWKSYLVNLWQCHFDVWSHAASIRINQLSKHSLDFLSYFSSVRRNPAVVRNQMLENSFLLNNAPNKLDTMVPIIPLIGSLAKAKFCNAVGHPISKLTRADLSDFEIINRFLHICRNLSHYYSGSSKKKNMYRIKYILRLSCVKTLARKHKSTARAFLKRVDLEFFQEFFTEEGGFISLIFPRASFALRRLYSGRVWYLDIIFINGLSNHE.

Belongs to the intron maturase 2 family. MatK subfamily.

Its subcellular location is the plastid. The protein localises to the chloroplast. Functionally, usually encoded in the trnK tRNA gene intron. Probably assists in splicing its own and other chloroplast group II introns. This chain is Maturase K, found in Quercus rubra (Northern red oak).